The sequence spans 339 residues: Protein FAM50A (339 aa).

The tract at residues 1 to 31 is disordered; that stretch reads MAQYKGAASEAGRAMHLMKKREKQREQMEQM. Alanine 2 is modified (N-acetylalanine). Residue lysine 100 forms a Glycyl lysine isopeptide (Lys-Gly) (interchain with G-Cter in SUMO2) linkage. Residues 150 to 177 form a disordered region; the sequence is TTKKKKLGKNPDVDTSFLPDRDREEEEN. A Nuclear localization signal motif is present at residues 152–155; that stretch reads KKKK. Residues 168-177 are compositionally biased toward basic and acidic residues; it reads PDRDREEEEN.

The protein belongs to the FAM50 family. In terms of assembly, interacts with EFTUD2, a component of the spliceosome U5 complex. Interacts with DDX41, a component of the spliceosome C complex. In terms of tissue distribution, widely expressed in embryonic and adult tissues.

Its subcellular location is the nucleus. Its function is as follows. Probably involved in the regulation of pre-mRNA splicing. The polypeptide is Protein FAM50A (Fam50a) (Mus musculus (Mouse)).